A 308-amino-acid polypeptide reads, in one-letter code: ADP-L-glycero-D-manno-heptose-6-epimerase (308 aa).

Residues phenylalanine 10 to isoleucine 11, aspartate 31 to asparagine 32, lysine 38, lysine 53, glutamate 75 to serine 79, and asparagine 92 contribute to the NADP(+) site. Residue tyrosine 139 is the Proton acceptor of the active site. Lysine 143 serves as a coordination point for NADP(+). Asparagine 168 is a binding site for substrate. Valine 169 and lysine 177 together coordinate NADP(+). The active-site Proton acceptor is lysine 177. Residues serine 179, histidine 186, phenylalanine 200–serine 203, arginine 208, and tyrosine 271 contribute to the substrate site.

Belongs to the NAD(P)-dependent epimerase/dehydratase family. HldD subfamily. As to quaternary structure, homopentamer. The cofactor is NADP(+).

The enzyme catalyses ADP-D-glycero-beta-D-manno-heptose = ADP-L-glycero-beta-D-manno-heptose. Its pathway is nucleotide-sugar biosynthesis; ADP-L-glycero-beta-D-manno-heptose biosynthesis; ADP-L-glycero-beta-D-manno-heptose from D-glycero-beta-D-manno-heptose 7-phosphate: step 4/4. Functionally, catalyzes the interconversion between ADP-D-glycero-beta-D-manno-heptose and ADP-L-glycero-beta-D-manno-heptose via an epimerization at carbon 6 of the heptose. In Haemophilus influenzae (strain PittGG), this protein is ADP-L-glycero-D-manno-heptose-6-epimerase.